A 181-amino-acid chain; its full sequence is MFRGGTHRLRGQPGLSLPHGPRCYGSAPPELQEKTLVLVKPDAVQRRLVGNVIQRFERRGFKLVAMKLLQADQGLLDKHYQQLRQKPFYPALLAYMTSGPLVAMVWEGYNVVRSTRAMVGDTDSAVAAAGTIRGDFSMHVSRNVVHASDSVETAQREIGFWFQRNELVAWESGDRDYTWGP.

Over residues 1–10 the composition is skewed to basic residues; sequence MFRGGTHRLR. The tract at residues 1-22 is disordered; it reads MFRGGTHRLRGQPGLSLPHGPR. Residues 1–24 constitute a mitochondrion transit peptide; it reads MFRGGTHRLRGQPGLSLPHGPRCY. Lys40, Phe88, Arg116, Thr122, Arg133, and Asn143 together coordinate ATP. Residue His146 is the Pros-phosphohistidine intermediate of the active site.

Belongs to the NDK family. Mg(2+) serves as cofactor. As to expression, highest levels in the liver and kidney with lower levels in the heart, brain and breast muscle.

The protein localises to the mitochondrion intermembrane space. The protein resides in the mitochondrion matrix. It carries out the reaction a 2'-deoxyribonucleoside 5'-diphosphate + ATP = a 2'-deoxyribonucleoside 5'-triphosphate + ADP. The enzyme catalyses a ribonucleoside 5'-diphosphate + ATP = a ribonucleoside 5'-triphosphate + ADP. Its activity is regulated as follows. Feedback inhibition by ADP. Major role in the synthesis of nucleoside triphosphates other than ATP. The ATP gamma phosphate is transferred to the NDP beta phosphate via a ping-pong mechanism, using a phosphorylated active-site intermediate. Through the catalyzed exchange of gamma-phosphate between di- and triphosphonucleosides participates in regulation of intracellular nucleotide homeostasis. Binds to anionic phospholipids, predominantly to cardiolipin; the binding inhibits its phosphotransfer activity. Acts as a mitochondria-specific NDK coupled to respiration. Promotes the redistribution of cardiolipin between the mitochondrial inner membrane and outer membrane which is implicated in pro-apoptotic signaling. The protein is Nucleoside diphosphate kinase, mitochondrial (NME4) of Columba livia (Rock dove).